A 444-amino-acid chain; its full sequence is Phosphoglucosamine mutase (444 aa).

Ser100 acts as the Phosphoserine intermediate in catalysis. Residues Ser100, Asp240, Asp242, and Asp244 each coordinate Mg(2+). At Ser100 the chain carries Phosphoserine.

This sequence belongs to the phosphohexose mutase family. Requires Mg(2+) as cofactor. Post-translationally, activated by phosphorylation.

It catalyses the reaction alpha-D-glucosamine 1-phosphate = D-glucosamine 6-phosphate. In terms of biological role, catalyzes the conversion of glucosamine-6-phosphate to glucosamine-1-phosphate. The polypeptide is Phosphoglucosamine mutase (Moorella thermoacetica (strain ATCC 39073 / JCM 9320)).